The sequence spans 333 residues: Electron transfer flavoprotein subunit alpha, mitochondrial (333 aa).

The N-terminal 19 residues, 1 to 19, are a transit peptide targeting the mitochondrion; it reads MFRAAAPGQLRRATSLLRF. The domain I stretch occupies residues 20-204; the sequence is QSTLVIAEHA…GISEWLDQKL (185 aa). K59 is modified (N6-acetyllysine; alternate). K59 carries the N6-succinyllysine; alternate modification. N6-acetyllysine is present on K62. K69 is modified (N6-acetyllysine; alternate). At K69 the chain carries N6-succinyllysine; alternate. K75 carries the N6-acetyllysine modification. An N6-acetyllysine; alternate modification is found at K85. An N6-succinyllysine; alternate modification is found at K85. A Phosphothreonine modification is found at T93. K101 and K139 each carry N6-acetyllysine. S140 carries the phosphoserine modification. At K158 the chain carries N6-acetyllysine; alternate. K158 is subject to N6-succinyllysine; alternate. K164 carries the N6-acetyllysine modification. K187 carries the N6-succinyllysine modification. N6-acetyllysine; alternate is present on K203. K203 is subject to N6-succinyllysine; alternate. The tract at residues 205–333 is domain II; sequence TKSDRPELTG…PEMTELLKKK (129 aa). An N6-succinyllysine modification is found at K216. R223 contacts FAD. An N6-acetyllysine; alternate mark is found at K226 and K232. K226 and K232 each carry N6-succinyllysine; alternate. FAD contacts are provided by residues S248, 263–266, 281–286, and N300; these read VGQT and SGAIQH. Position 301 is an N6-succinyllysine (K301). 318-319 serves as a coordination point for FAD; sequence DL.

Belongs to the ETF alpha-subunit/FixB family. Heterodimer composed of ETFA and ETFB. Identified in a complex that contains ETFA, ETFB and ETFRF1. Interaction with ETFRF1 promotes dissociation of the bound FAD and loss of electron transfer activity. Interacts with TASOR. FAD is required as a cofactor.

It is found in the mitochondrion matrix. In terms of biological role, heterodimeric electron transfer flavoprotein that accepts electrons from several mitochondrial dehydrogenases, including acyl-CoA dehydrogenases, glutaryl-CoA and sarcosine dehydrogenase. It transfers the electrons to the main mitochondrial respiratory chain via ETF-ubiquinone oxidoreductase (ETF dehydrogenase). Required for normal mitochondrial fatty acid oxidation and normal amino acid metabolism. This is Electron transfer flavoprotein subunit alpha, mitochondrial (ETFA) from Bos taurus (Bovine).